Here is a 492-residue protein sequence, read N- to C-terminus: Catalase isozyme 1 (492 aa).

Active-site residues include His-65 and Asn-138. Tyr-348 contributes to the heme binding site.

Belongs to the catalase family. As to quaternary structure, homotetramer. Heme serves as cofactor.

The protein resides in the cytoplasm. It is found in the cytosol. It localises to the peroxisome matrix. The enzyme catalyses 2 H2O2 = O2 + 2 H2O. Its activity is regulated as follows. Inhibited by salicylic acid. Its function is as follows. Catalyzes the degradation of hydrogen peroxide (H(2)O(2)) generated by peroxisomal oxidases to water and oxygen, thereby protecting cells from the toxic effects of hydrogen peroxide. The polypeptide is Catalase isozyme 1 (CAT-1) (Nicotiana tabacum (Common tobacco)).